The primary structure comprises 256 residues: uncharacterized protein (256 aa).

The S4 RNA-binding domain maps to 16-83 (VRLQKILSRA…DSLVYLALNK (68 aa)). D121 (nucleophile) is an active-site residue.

This sequence belongs to the pseudouridine synthase RsuA family.

It catalyses the reaction a uridine in RNA = a pseudouridine in RNA. This is an uncharacterized protein from Mycobacterium leprae (strain TN).